Here is a 205-residue protein sequence, read N- to C-terminus: Holliday junction branch migration complex subunit RuvA (205 aa).

The segment at 1-64 is domain I; the sequence is MIGKLKGLID…EDQIKLFGFR (64 aa). The interval 65–143 is domain II; that stretch reads SDLEREWFRL…GFASVDPAVA (79 aa). The segment at 144–153 is flexible linker; it reads HLSGAIEERS. Positions 153-205 are domain III; that stretch reads SAPRPVADAISALVNLGYGQPQAAAAIAAAARSAGDAAQTAQLIKLGLKELSK.

Belongs to the RuvA family. In terms of assembly, homotetramer. Forms an RuvA(8)-RuvB(12)-Holliday junction (HJ) complex. HJ DNA is sandwiched between 2 RuvA tetramers; dsDNA enters through RuvA and exits via RuvB. An RuvB hexamer assembles on each DNA strand where it exits the tetramer. Each RuvB hexamer is contacted by two RuvA subunits (via domain III) on 2 adjacent RuvB subunits; this complex drives branch migration. In the full resolvosome a probable DNA-RuvA(4)-RuvB(12)-RuvC(2) complex forms which resolves the HJ.

It is found in the cytoplasm. Its function is as follows. The RuvA-RuvB-RuvC complex processes Holliday junction (HJ) DNA during genetic recombination and DNA repair, while the RuvA-RuvB complex plays an important role in the rescue of blocked DNA replication forks via replication fork reversal (RFR). RuvA specifically binds to HJ cruciform DNA, conferring on it an open structure. The RuvB hexamer acts as an ATP-dependent pump, pulling dsDNA into and through the RuvAB complex. HJ branch migration allows RuvC to scan DNA until it finds its consensus sequence, where it cleaves and resolves the cruciform DNA. This Rhodopseudomonas palustris (strain BisA53) protein is Holliday junction branch migration complex subunit RuvA.